A 367-amino-acid chain; its full sequence is MFDPASFVEEIGPQLRQKLGNEKVLAAVSGGVDSTTAAVLAYNLLGDKVIPVLVDTGFLRKNEAEKIKDYLSNILPNLIIVDKKETFISEIEGIDDAEMKRKRFRELFYSTISSLMKKFNARYLMQGTIAADWVETQGGIKTQHNVLVQIGIDTEKEWGFTLIEPLADLYKNEVRELARYLKLPKEISERQPFPGPGLLVRAVGKLTREKLEVVREANDIVEKYLDPFNYSQYFAVSFESYGNLVNLDGIDAFLYKARATGVKGDVRAYGNIAKIECSNINNVKNIIDTLVKYDITHVLCTLDERNSGKYSVAIRAVTTEDFMTADYVRIPKEILSKISSEILQKIPNVKEVLYDVTSKPPATIEFE.

Residues 2–190 form the GMPS ATP-PPase domain; that stretch reads FDPASFVEEI…LKLPKEISER (189 aa). 29-35 is a binding site for ATP; it reads SGGVDST.

In terms of assembly, heterodimer composed of a glutamine amidotransferase subunit (A) and a GMP-binding subunit (B).

The catalysed reaction is XMP + L-glutamine + ATP + H2O = GMP + L-glutamate + AMP + diphosphate + 2 H(+). It participates in purine metabolism; GMP biosynthesis; GMP from XMP (L-Gln route): step 1/1. Its function is as follows. Catalyzes the synthesis of GMP from XMP. This chain is GMP synthase [glutamine-hydrolyzing] subunit B (guaAB), found in Saccharolobus solfataricus (strain ATCC 35092 / DSM 1617 / JCM 11322 / P2) (Sulfolobus solfataricus).